The following is a 395-amino-acid chain: Zinc-regulated GTPase metalloprotein activator 1A (395 aa).

The disordered stretch occupies residues 1–22 (MLPAVGSADEEEDPAEEDCPEL). Residues 8 to 20 (ADEEEDPAEEDCP) are compositionally biased toward acidic residues. The psi-PxLVp motif signature appears at 17–24 (EDCPELVP). 49-56 (GYLGAGKT) contributes to the GTP binding site. 3 residues coordinate Zn(2+): Cys-107, Cys-109, and Cys-110. Positions 107–110 (CLCC) match the CXCC motif motif. GTP-binding positions include 110 to 114 (CSVKD) and 203 to 206 (NKTD). In terms of domain architecture, CobW C-terminal spans 274–377 (IVTITFEVPG…ILKQLFIATV (104 aa)).

It belongs to the SIMIBI class G3E GTPase family. ZNG1 subfamily. In terms of tissue distribution, ubiquitously expressed. Up-regulated in cultured astrocytes treated with dopamine.

It localises to the nucleus. It catalyses the reaction GTP + H2O = GDP + phosphate + H(+). Functionally, zinc chaperone that directly transfers zinc cofactor to target metalloproteins, thereby activating them. Catalyzes zinc insertion into the active site of methionine aminopeptidase METAP1, which function to cleave the initiator methionine from polypeptides during or after protein translation. Mechanistically, the N-terminal psi-PxLVp motif binds to the C6H2-type zinc finger of inactive form of METAP1. After formation of the docked complex, zinc is transferred from the CXCC motif in the GTPase domain of ZNG1A to the zinc binding site in the peptidase domain of METAP1 in a process requiring GTP hydrolysis. GTP/GDP exchange is required for release of active METAP1. This chain is Zinc-regulated GTPase metalloprotein activator 1A, found in Homo sapiens (Human).